The chain runs to 119 residues: Large ribosomal subunit protein uL14m (119 aa).

It belongs to the universal ribosomal protein uL14 family.

Its subcellular location is the mitochondrion. The polypeptide is Large ribosomal subunit protein uL14m (Tetrahymena pyriformis).